The chain runs to 366 residues: uncharacterized protein (366 aa).

Residues 1 to 135 (MNQTGRTIGG…PPKNVDTIDK (135 aa)) form a disordered region. The span at 26–38 (PSEDRVSSRDETP) shows a compositional bias: basic and acidic residues. Ser-69 is subject to Phosphoserine. Thr-76 carries the post-translational modification Phosphothreonine. Residue Lys-78 forms a Glycyl lysine isopeptide (Lys-Gly) (interchain with G-Cter in ubiquitin) linkage. Residues 97–108 (QHNHHHHRRTSH) are compositionally biased toward basic residues. Lys-187 is covalently cross-linked (Glycyl lysine isopeptide (Lys-Gly) (interchain with G-Cter in ubiquitin)). Thr-189 is modified (phosphothreonine). Lys-242 participates in a covalent cross-link: Glycyl lysine isopeptide (Lys-Gly) (interchain with G-Cter in ubiquitin). Phosphoserine occurs at positions 288 and 294. Residues 313-366 (THSGHLEQKDVDDNRTSVPVTATQGSGHEDVVKKENTGNKLLRRVKSLKTSKKH) form a disordered region. The segment covering 316-327 (GHLEQKDVDDNR) has biased composition (basic and acidic residues). The segment covering 328 to 338 (TSVPVTATQGS) has biased composition (polar residues). Residues 339 to 349 (GHEDVVKKENT) are compositionally biased toward basic and acidic residues. The segment covering 353 to 366 (LLRRVKSLKTSKKH) has biased composition (basic residues). Phosphoserine is present on Ser-359.

It belongs to the pal1 family.

Its subcellular location is the cytoplasm. The protein resides in the nucleus. This is an uncharacterized protein from Saccharomyces cerevisiae (strain ATCC 204508 / S288c) (Baker's yeast).